The following is a 535-amino-acid chain: Nuclear/nucleolar GTPase 2 (535 aa).

The segment at 1 to 42 is disordered; the sequence is MAKKKERAVNVSGKPRHSLDVNRANDKKGAGGGAGGGGGGRS. The segment covering 17–29 has biased composition (basic and acidic residues); that stretch reads HSLDVNRANDKKG. Residues 30–41 are compositionally biased toward gly residues; that stretch reads AGGGAGGGGGGR. The CP-type G domain maps to 213-374; that stretch reads WGELYKVIDS…LIDCPGVVYQ (162 aa). A G4 region spans residues 261 to 264; the sequence is NKCD. The interval 290–292 is G5; it reads SIN. A G1 region spans residues 323 to 330; it reads GYPNVGKS. The interval 349 to 353 is G2; that stretch reads GETKV. Residues 367 to 370 are G3; sequence DCPG. Positions 464–495 are disordered; that stretch reads FFVPPPQQGEDSPSETAEPVDKSDEEGVSSDR.

The protein belongs to the TRAFAC class YlqF/YawG GTPase family. RsgA subfamily.

The protein resides in the nucleus. It localises to the nucleolus. GTPase involved in pre-60S ribosomal subunit maturation. This chain is Nuclear/nucleolar GTPase 2, found in Oryza sativa subsp. indica (Rice).